The chain runs to 363 residues: Peroxin-36 (363 aa).

Residues 1-193 lie on the Cytoplasmic side of the membrane; sequence MSNLEKQIRL…ESFFINSFEQ (193 aa). Disordered stretches follow at residues 71 to 114 and 128 to 157; these read QNHQ…DTST and TNSN…SKSG. Low complexity predominate over residues 97–114; it reads VDSNSDSSSSETLIDTST. The chain crosses the membrane as a helical span at residues 194–213; sequence LIALFDNFYFLSSLIGFNTS. At 214 to 232 the chain is on the peroxisomal side; sequence NSNSKITRLLRNFIKQASK. A helical transmembrane segment spans residues 233-250; sequence IWLVIIFLTVKNLFIRMI. Topologically, residues 251–363 are cytoplasmic; that stretch reads KLNRTEKKVK…SSDDIIDEYA (113 aa).

It localises to the peroxisome membrane. Its function is as follows. Controls peroxisome morphology and abundance under conditions of peroxisome proliferation such as oleate and methanol media. Has additional function(s), which is not present in its functional homologs such as Saccharomyces cerevisea PEX34 or human PEX16. This Komagataella phaffii (strain GS115 / ATCC 20864) (Yeast) protein is Peroxin-36.